We begin with the raw amino-acid sequence, 268 residues long: Probable histidine-binding protein (268 aa).

Positions 1–20 are cleaved as a signal peptide; that stretch reads MNMKKWIAAALACSALALSA. The N-palmitoyl cysteine moiety is linked to residue Cys-21. Cys-21 carries the S-diacylglycerol cysteine lipid modification.

Belongs to the bacterial solute-binding protein 3 family.

The protein localises to the cell membrane. Functionally, involved in histidine transport. The protein is Probable histidine-binding protein (hisJ) of Neisseria gonorrhoeae.